A 247-amino-acid polypeptide reads, in one-letter code: Acetoacetate decarboxylase 1 (247 aa).

Lys116 functions as the Schiff-base intermediate with acetoacetate in the catalytic mechanism.

Belongs to the ADC family.

The catalysed reaction is acetoacetate + H(+) = acetone + CO2. Catalyzes the conversion of acetoacetate to acetone and carbon dioxide. In Mesorhizobium japonicum (strain LMG 29417 / CECT 9101 / MAFF 303099) (Mesorhizobium loti (strain MAFF 303099)), this protein is Acetoacetate decarboxylase 1.